Here is a 168-residue protein sequence, read N- to C-terminus: Disulfide bond formation protein B (168 aa).

Residues 1–11 (MSNPMRPVRSI) are Cytoplasmic-facing. Residues 12 to 28 (LLAIFTGCAGLIGYALY) traverse the membrane as a helical segment. Over 29 to 46 (LQLVENLLPCPLCVVQRM) the chain is Periplasmic. C38 and C41 form a disulfide bridge. The chain crosses the membrane as a helical span at residues 47–63 (AYWLIGLTALAGFFHTP). The Cytoplasmic portion of the chain corresponds to 64–69 (ETTGRR). Residues 70 to 87 (IYAGLMAVFAFTGGLVAL) traverse the membrane as a helical segment. The Periplasmic segment spans residues 88–143 (RQAWLVRYPEAFECGISPEEAFLNALPLARWWPVMFEANGDCADVTWKFASLTLPD). C101 and C129 form a disulfide bridge. A helical membrane pass occupies residues 144 to 162 (WSAIFFMILAALSIYVLLV). The Cytoplasmic portion of the chain corresponds to 163–168 (RENQRE).

It belongs to the DsbB family.

The protein localises to the cell inner membrane. In terms of biological role, required for disulfide bond formation in some periplasmic proteins. Acts by oxidizing the DsbA protein. In Nitrosospira multiformis (strain ATCC 25196 / NCIMB 11849 / C 71), this protein is Disulfide bond formation protein B.